We begin with the raw amino-acid sequence, 416 residues long: Gamma-glutamyl phosphate reductase (416 aa).

It belongs to the gamma-glutamyl phosphate reductase family.

It localises to the cytoplasm. It catalyses the reaction L-glutamate 5-semialdehyde + phosphate + NADP(+) = L-glutamyl 5-phosphate + NADPH + H(+). The protein operates within amino-acid biosynthesis; L-proline biosynthesis; L-glutamate 5-semialdehyde from L-glutamate: step 2/2. Functionally, catalyzes the NADPH-dependent reduction of L-glutamate 5-phosphate into L-glutamate 5-semialdehyde and phosphate. The product spontaneously undergoes cyclization to form 1-pyrroline-5-carboxylate. This chain is Gamma-glutamyl phosphate reductase, found in Halalkalibacterium halodurans (strain ATCC BAA-125 / DSM 18197 / FERM 7344 / JCM 9153 / C-125) (Bacillus halodurans).